Consider the following 286-residue polypeptide: Polyamine aminopropyltransferase 1 (286 aa).

The PABS domain occupies 1–235 (MSDYQETLYQ…GAMTFAWGST (235 aa)). Position 30 (glutamine 30) interacts with S-methyl-5'-thioadenosine. Residues histidine 61 and aspartate 85 each coordinate spermidine. Residues glutamate 105 and 137 to 138 (DG) contribute to the S-methyl-5'-thioadenosine site. The Proton acceptor role is filled by aspartate 155. 155–158 (DSTD) is a spermidine binding site. Proline 162 contributes to the S-methyl-5'-thioadenosine binding site.

The protein belongs to the spermidine/spermine synthase family. As to quaternary structure, homodimer or homotetramer.

It localises to the cytoplasm. The enzyme catalyses S-adenosyl 3-(methylsulfanyl)propylamine + putrescine = S-methyl-5'-thioadenosine + spermidine + H(+). Its pathway is amine and polyamine biosynthesis; spermidine biosynthesis; spermidine from putrescine: step 1/1. In terms of biological role, catalyzes the irreversible transfer of a propylamine group from the amino donor S-adenosylmethioninamine (decarboxy-AdoMet) to putrescine (1,4-diaminobutane) to yield spermidine. The chain is Polyamine aminopropyltransferase 1 from Pseudomonas aeruginosa (strain ATCC 15692 / DSM 22644 / CIP 104116 / JCM 14847 / LMG 12228 / 1C / PRS 101 / PAO1).